Here is a 183-residue protein sequence, read N- to C-terminus: Inner membrane-spanning protein YciB (183 aa).

The next 5 helical transmembrane spans lie at 22–44, 54–74, 76–96, 119–139, and 149–169; these read IYTA…WVRY, TFLL…DAFI, WKVT…RYGF, VNLA…YVAF, and FKVF…GVYL.

It belongs to the YciB family.

Its subcellular location is the cell inner membrane. Its function is as follows. Plays a role in cell envelope biogenesis, maintenance of cell envelope integrity and membrane homeostasis. The protein is Inner membrane-spanning protein YciB of Aeromonas salmonicida (strain A449).